We begin with the raw amino-acid sequence, 186 residues long: 19 kDa globulin (186 aa).

The first 22 residues, 1-22, serve as a signal peptide directing secretion; it reads MASKVVFFAAALMAAMVAISGA. Positions 108 to 155 are disordered; that stretch reads PLEQGWSSSSSEYYGGEGSSSEQGYYGEGSSEEGYYGEQQQQPGMTRV. Residues 110–149 are compositionally biased toward low complexity; the sequence is EQGWSSSSSEYYGGEGSSSEQGYYGEGSSEEGYYGEQQQQ.

Belongs to the 2S seed storage albumins family.

Its subcellular location is the secreted. Functionally, seed storage protein. The sequence is that of 19 kDa globulin from Oryza sativa subsp. japonica (Rice).